A 128-amino-acid chain; its full sequence is MLQIAKLCLATSGRITAQRYVAVTTARAIDQKWREAKGLPENPNAFGPLTNLPDYTFLDGRPTPLGSNQKKRLERQQEIATKIVELSGELEFAKQRYERQRVAAATEKQRIIQNKLKPKGHLMLKQKK.

The transit peptide at 1–28 directs the protein to the mitochondrion; that stretch reads MLQIAKLCLATSGRITAQRYVAVTTARA.

It belongs to the mitochondrion-specific ribosomal protein mL52 family. As to quaternary structure, component of the mitochondrial ribosome large subunit (39S) which comprises a 16S rRNA and about 50 distinct proteins.

Its subcellular location is the mitochondrion. This is Large ribosomal subunit protein mL52 (mRpL52) from Drosophila pseudoobscura pseudoobscura (Fruit fly).